We begin with the raw amino-acid sequence, 494 residues long: UPF0371 protein spyM18_1356 (494 aa).

It belongs to the UPF0371 family.

The sequence is that of UPF0371 protein spyM18_1356 from Streptococcus pyogenes serotype M18 (strain MGAS8232).